Consider the following 508-residue polypeptide: Glycerol kinase (508 aa).

Residue threonine 14 coordinates ADP. ATP is bound by residues threonine 14, threonine 15, and serine 16. Residue threonine 14 participates in sn-glycerol 3-phosphate binding. Residue arginine 18 participates in ADP binding. Sn-glycerol 3-phosphate-binding residues include arginine 84, glutamate 85, tyrosine 136, and aspartate 245. Arginine 84, glutamate 85, tyrosine 136, aspartate 245, and glutamine 246 together coordinate glycerol. Positions 267 and 314 each coordinate ADP. ATP contacts are provided by threonine 267, glycine 314, glutamine 318, and glycine 415. ADP-binding residues include glycine 415 and asparagine 419.

This sequence belongs to the FGGY kinase family.

The enzyme catalyses glycerol + ATP = sn-glycerol 3-phosphate + ADP + H(+). The protein operates within polyol metabolism; glycerol degradation via glycerol kinase pathway; sn-glycerol 3-phosphate from glycerol: step 1/1. With respect to regulation, inhibited by fructose 1,6-bisphosphate (FBP). Functionally, key enzyme in the regulation of glycerol uptake and metabolism. Catalyzes the phosphorylation of glycerol to yield sn-glycerol 3-phosphate. The sequence is that of Glycerol kinase from Bordetella parapertussis (strain 12822 / ATCC BAA-587 / NCTC 13253).